The following is a 1098-amino-acid chain: Protein diaphanous homolog 2 (1098 aa).

At Met-1 the chain carries N-acetylmethionine. Residues 1-62 are disordered; sequence MEELGAAASG…SFRKSATKRE (62 aa). Basic and acidic residues predominate over residues 36 to 52; sequence ANEEETRNKPKLRDRIT. Positions 90-463 constitute a GBD/FH3 domain; sequence SLILSEKEVL…QIVLHCSGMD (374 aa). Coiled coils occupy residues 375 to 416 and 490 to 539; these read QLRV…NMLK and EENE…GQGV. Disordered stretches follow at residues 537–565, 578–611, 679–699, 1007–1047, and 1063–1098; these read QGVP…PPPP, PPPP…GVFP, MKGQ…PKKK, HKRK…NKEG, and GAAF…MSSK. Pro residues-rich tracts occupy residues 543–565 and 578–608; these read IPGP…PPPP and PPPP…PPGG. The region spanning 544–620 is the FH1 domain; it reads PGPPPPPPLP…PLLSGPIELP (77 aa). Residues 625 to 1025 enclose the FH2 domain; the sequence is QKKLYKPDIP…SRRAKLAKEK (401 aa). Residues 999 to 1050 are a coiled coil; it reads FLEALKENHKRKEMEEKSRRAKLAKEKAEQEKLERQKKKKQLIDINKEGDET. Basic and acidic residues-rich tracts occupy residues 1007-1032 and 1075-1087; these read HKRK…EKLE and RNPD…LERS. The DAD domain occupies 1048–1078; sequence DETGVMDNLLEALQSGAAFRDRRKRIPRNPD.

This sequence belongs to the formin homology family. Diaphanous subfamily. Interacts with MAPRE1 and APC.

In terms of biological role, may be involved in oogenesis. In Mus musculus (Mouse), this protein is Protein diaphanous homolog 2 (Diaph2).